We begin with the raw amino-acid sequence, 157 residues long: Protein Smg (157 aa).

It belongs to the Smg family.

The protein is Protein Smg of Buchnera aphidicola subsp. Schizaphis graminum (strain Sg).